The chain runs to 403 residues: Serine/threonine-protein phosphatase 4 regulatory subunit 2-A (403 aa).

3 stretches are compositionally biased toward polar residues: residues 140-149 (EKNNSTSLNR), 156-170 (PSNSQSYTDRSNVNG), and 183-196 (SLSSPMNTNGLPDS). Residues 140-403 (EKNNSTSLNR…DAPEEPMEQD (264 aa)) form a disordered region. Residues 197-211 (TENKESDLQQKEKSQ) show a composition bias toward basic and acidic residues. Composition is skewed to polar residues over residues 212–226 (SDSAVSDDGSQATTS) and 371–387 (ATSSGKSTETLTLSPME). Positions 388–403 (NSEEATDAPEEPMEQD) are enriched in acidic residues.

The protein belongs to the PPP4R2 family. In terms of assembly, serine/threonine-protein phosphatase 4 (PP4) occurs in different assemblies of the catalytic and one or more regulatory subunits.

In terms of biological role, regulatory subunit of serine/threonine-protein phosphatase 4 (PP4). This is Serine/threonine-protein phosphatase 4 regulatory subunit 2-A (ppp4r2-a) from Xenopus laevis (African clawed frog).